A 328-amino-acid chain; its full sequence is Eukaryotic translation initiation factor 3 subunit I (328 aa).

WD repeat units lie at residues 8-49 (GHER…GTYE), 50-89 (GHTG…QLYK), 145-184 (TRES…FVES), 189-228 (NSGS…VIKT), and 286-327 (GHFG…FKYT).

It belongs to the eIF-3 subunit I family. Component of the eukaryotic translation initiation factor 3 (eIF-3) complex. The eIF-3 complex appears to include tif32/eif3a, SPAC25G10.08/eif3b, tif33/eif3c, SPBC4C3.07/eif3f, tif35/eif3g and sum1/eif3i. This set of common subunits may also associate exclusively with either moe1/eif3d and int6/eif3e, or with SPAC821.05/eif3h and SPAC1751.03/eif3m. The eIF-3 complex may also include SPAC3A12.13c/eif3j.

The protein localises to the cytoplasm. It is found in the nucleus. Component of the eukaryotic translation initiation factor 3 (eIF-3) complex, which is involved in protein synthesis of a specialized repertoire of mRNAs and, together with other initiation factors, stimulates binding of mRNA and methionyl-tRNAi to the 40S ribosome. The eIF-3 complex specifically targets and initiates translation of a subset of mRNAs involved in cell proliferation. The sequence is that of Eukaryotic translation initiation factor 3 subunit I (sum1) from Schizosaccharomyces pombe (strain 972 / ATCC 24843) (Fission yeast).